The primary structure comprises 428 residues: UPF0761 membrane protein Ppha_1623 (428 aa).

Transmembrane regions (helical) follow at residues 52 to 72 (LLSI…FVVF), 108 to 128 (SVPI…ISTV), 148 to 168 (FTLY…SLAA), 189 to 209 (LLSF…YMLV), 216 to 233 (FVHA…FELS), and 252 to 272 (GALS…IVVL).

Belongs to the UPF0761 family.

Its subcellular location is the cell inner membrane. This is UPF0761 membrane protein Ppha_1623 from Pelodictyon phaeoclathratiforme (strain DSM 5477 / BU-1).